The primary structure comprises 333 residues: Transcription initiation factor IIB (333 aa).

The segment at 33 to 64 adopts a TFIIB-type zinc-finger fold; the sequence is EVYRCPICGNDRFVYNYERGEIVCIVCGAVVQ. Zn(2+) is bound by residues Cys37, Cys40, Cys56, and Cys59. Tandem repeats lie at residues 149–232 and 243–324.

The protein belongs to the TFIIB family.

Functionally, stabilizes TBP binding to an archaeal box-A promoter. Also responsible for recruiting RNA polymerase II to the pre-initiation complex (DNA-TBP-TFIIB). The protein is Transcription initiation factor IIB of Pyrobaculum islandicum (strain DSM 4184 / JCM 9189 / GEO3).